The following is a 108-amino-acid chain: uncharacterized protein (108 aa).

The helical transmembrane segment at 10 to 32 threads the bilayer; it reads LQAPYILCTSFITLKIHNFFFFF.

It is found in the membrane. This is an uncharacterized protein from Saccharomyces cerevisiae (strain ATCC 204508 / S288c) (Baker's yeast).